The chain runs to 630 residues: Chaperone protein HtpG (630 aa).

The tract at residues 1–338 is a; substrate-binding; the sequence is MTVEANKETL…SNDLSLNVSR (338 aa). The tract at residues 339-555 is b; it reads EILQNDSTVE…QFDMGAQMKK (217 aa). A c region spans residues 556–630; that stretch reads IMEAAGQKVP…LNRLLLELAN (75 aa).

This sequence belongs to the heat shock protein 90 family. As to quaternary structure, homodimer.

It localises to the cytoplasm. Its function is as follows. Molecular chaperone. Has ATPase activity. This Marinobacter nauticus (strain ATCC 700491 / DSM 11845 / VT8) (Marinobacter aquaeolei) protein is Chaperone protein HtpG.